Consider the following 333-residue polypeptide: T-cell surface glycoprotein CD1c (333 aa).

The signal sequence occupies residues 1–17; the sequence is MLFLQFLLLALLLPGGD. Residues 18-302 lie on the Extracellular side of the membrane; it reads NADASQEHVS…ILYWGHHFSM (285 aa). 4 N-linked (GlcNAc...) asparagine glycosylation sites follow: asparagine 38, asparagine 70, asparagine 75, and asparagine 146. Disulfide bonds link cysteine 120–cysteine 185 and cysteine 225–cysteine 280. Positions 206-296 constitute an Ig-like domain; that stretch reads PEAWLSSRPS…LGGQDIILYW (91 aa). The helical transmembrane segment at 303-323 threads the bilayer; it reads NWIALVVIVPLVILIVLVLWF. Residues 324 to 333 lie on the Cytoplasmic side of the membrane; that stretch reads KKHCSYQDIL. The Internalization signal motif lies at 329-332; sequence YQDI.

Heterodimer with B2M (beta-2-microglobulin). Expressed on cortical thymocytes, on certain T-cell leukemias, and in various other tissues.

The protein localises to the cell membrane. Its subcellular location is the endosome membrane. It is found in the lysosome. In terms of biological role, antigen-presenting protein that binds self and non-self lipid and glycolipid antigens and presents them to T-cell receptors on natural killer T-cells. This Homo sapiens (Human) protein is T-cell surface glycoprotein CD1c (CD1C).